The chain runs to 278 residues: Sulfide dehydrogenase subunit beta (278 aa).

The propeptide occupies 1 to 4; it reads MFKI. The region spanning 1–95 is the FAD-binding FR-type domain; that stretch reads MFKILRKERL…LGPLGKPSHI (95 aa). [2Fe-2S] cluster contacts are provided by Cys222, Cys225, and Cys237.

In terms of assembly, heterodimer of alpha and beta subunits. Requires FAD as cofactor. It depends on [2Fe-2S] cluster as a cofactor.

Its subcellular location is the cytoplasm. It catalyses the reaction n sulfur + hydrogen sulfide + NADP(+) = (n+1) sulfur + NADPH. The catalysed reaction is 2 reduced [2Fe-2S]-[ferredoxin] + NADP(+) + H(+) = 2 oxidized [2Fe-2S]-[ferredoxin] + NADPH. Its function is as follows. A bifunctional enzyme that catalyzes the reduction of elemental sulfur or polysulfide to hydrogen sulfide with NADPH as electron donor. Also functions as a reduced ferredoxin:NADP oxidoreductase with a very high affinity for reduced ferredoxin. Exhibits a broad specificity for various physiological and non-physiological substrates with varied reduction potentials such as methyl viologen, benzyl viologen, FAD, FMN, methylene blue, 2,6-dichlorophenolindophenol (DCIP), cytochrome C and ferricyanide with highest preference for benzyl viologen. Does not reduce fumarate, succinate, nitrate, nitrite, sulfate, sulfite or protons. Does not possess any hydrogenase activity or NADPH-dependent glutamate synthase activity. The chain is Sulfide dehydrogenase subunit beta from Pyrococcus furiosus (strain ATCC 43587 / DSM 3638 / JCM 8422 / Vc1).